The chain runs to 131 residues: Protein NEGATIVE REGULATOR OF RESISTANCE (131 aa).

Disordered stretches follow at residues 1–33 (MDATTTDATTAKRKRPAASDIADDAPTTVDEVS) and 51–131 (TRRL…RAPA). Residues 12-15 (KRKR) carry the Nuclear localization signal motif. The segment covering 116–131 (PPSDAPATPRSARAPA) has biased composition (low complexity).

Belongs to the NPR1-interactor family. In terms of assembly, interacts with NPR1/NH1. Interacts with NPR2/NH2.

The protein localises to the nucleus. Its function is as follows. Acts as a negative regulator of disease resistance. Acts on basal resistance, age-related resistance and resistance mediated by the LRR receptor kinase XA21. Plants over-expressing NRR display enhanced susceptibility to the bacterial blight Xanthomonas oryzae pv. oryzae (Xoo). This is Protein NEGATIVE REGULATOR OF RESISTANCE from Oryza sativa subsp. indica (Rice).